Consider the following 211-residue polypeptide: Uracil phosphoribosyltransferase (211 aa).

5-phospho-alpha-D-ribose 1-diphosphate is bound by residues arginine 78, arginine 103, and 130–138 (DPMLATGGT). Uracil-binding positions include isoleucine 195 and 200 to 202 (GDA). 5-phospho-alpha-D-ribose 1-diphosphate is bound at residue aspartate 201.

This sequence belongs to the UPRTase family. It depends on Mg(2+) as a cofactor.

It catalyses the reaction UMP + diphosphate = 5-phospho-alpha-D-ribose 1-diphosphate + uracil. Its pathway is pyrimidine metabolism; UMP biosynthesis via salvage pathway; UMP from uracil: step 1/1. Allosterically activated by GTP. Catalyzes the conversion of uracil and 5-phospho-alpha-D-ribose 1-diphosphate (PRPP) to UMP and diphosphate. The chain is Uracil phosphoribosyltransferase from Streptomyces coelicolor (strain ATCC BAA-471 / A3(2) / M145).